Reading from the N-terminus, the 156-residue chain is Small ribosomal subunit protein uS7 (156 aa).

The protein belongs to the universal ribosomal protein uS7 family. Part of the 30S ribosomal subunit. Contacts proteins S9 and S11.

Its function is as follows. One of the primary rRNA binding proteins, it binds directly to 16S rRNA where it nucleates assembly of the head domain of the 30S subunit. Is located at the subunit interface close to the decoding center, probably blocks exit of the E-site tRNA. The sequence is that of Small ribosomal subunit protein uS7 from Deinococcus deserti (strain DSM 17065 / CIP 109153 / LMG 22923 / VCD115).